Consider the following 248-residue polypeptide: 2,3-bisphosphoglycerate-dependent phosphoglycerate mutase (248 aa).

Substrate-binding positions include 7–14 (RHGESIWN), 20–21 (TG), arginine 59, 86–89 (ERHY), lysine 97, 113–114 (RR), and 182–183 (GN). Histidine 8 acts as the Tele-phosphohistidine intermediate in catalysis. Catalysis depends on glutamate 86, which acts as the Proton donor/acceptor.

The protein belongs to the phosphoglycerate mutase family. BPG-dependent PGAM subfamily.

It carries out the reaction (2R)-2-phosphoglycerate = (2R)-3-phosphoglycerate. Its pathway is carbohydrate degradation; glycolysis; pyruvate from D-glyceraldehyde 3-phosphate: step 3/5. Its function is as follows. Catalyzes the interconversion of 2-phosphoglycerate and 3-phosphoglycerate. The sequence is that of 2,3-bisphosphoglycerate-dependent phosphoglycerate mutase from Methylacidiphilum infernorum (isolate V4) (Methylokorus infernorum (strain V4)).